The following is a 404-amino-acid chain: Cysteine desulfurase IscS (404 aa).

Residues Ala75–Thr76, Asn155, Gln183, and Ser203–His205 contribute to the pyridoxal 5'-phosphate site. Lys206 carries the post-translational modification N6-(pyridoxal phosphate)lysine. A pyridoxal 5'-phosphate-binding site is contributed by Thr243. Cys328 (cysteine persulfide intermediate) is an active-site residue. Cys328 lines the [2Fe-2S] cluster pocket.

It belongs to the class-V pyridoxal-phosphate-dependent aminotransferase family. NifS/IscS subfamily. As to quaternary structure, homodimer. Forms a heterotetramer with IscU, interacts with other sulfur acceptors. It depends on pyridoxal 5'-phosphate as a cofactor.

It is found in the cytoplasm. It carries out the reaction (sulfur carrier)-H + L-cysteine = (sulfur carrier)-SH + L-alanine. It functions in the pathway cofactor biosynthesis; iron-sulfur cluster biosynthesis. Functionally, master enzyme that delivers sulfur to a number of partners involved in Fe-S cluster assembly, tRNA modification or cofactor biosynthesis. Catalyzes the removal of elemental sulfur atoms from cysteine to produce alanine. Functions as a sulfur delivery protein for Fe-S cluster synthesis onto IscU, an Fe-S scaffold assembly protein, as well as other S acceptor proteins. This is Cysteine desulfurase IscS from Vibrio atlanticus (strain LGP32) (Vibrio splendidus (strain Mel32)).